Reading from the N-terminus, the 318-residue chain is MENLNLVSLPHFVNVENLDVEEVEALIKRAEYFKKGGATPRLTTPVYITNMFFEDSSRTHTSFEMAERKLGLIVIPFDPAHSSVNKGETLYDTSLIMDALGVNIEVIRHSRNEYYNDLIDLKEHQHLNMGIINAGDGSGQHPSQCMLDMMTIHEHFGHFKDLKVAIVGDITNSRVAKSDMELLTRLGAKVYFSGPSYWYDKEFDKYGKFEELDKLIPDMDVMMLLRVQHERHADDPNEKAFDAQEYHEKYGINHKRYEELKPDTIIMHPGPINHDVELSGNLVESKKCMFVRQMQNGVFMRMAMIEAVLRGRKLGGLE.

Carbamoyl phosphate is bound by residues arginine 58 and threonine 59. Lysine 86 lines the L-aspartate pocket. Carbamoyl phosphate-binding residues include arginine 108, histidine 141, and glutamine 144. The L-aspartate site is built by arginine 174 and arginine 226. 2 residues coordinate carbamoyl phosphate: glycine 270 and proline 271.

The protein belongs to the aspartate/ornithine carbamoyltransferase superfamily. ATCase family. In terms of assembly, heterododecamer (2C3:3R2) of six catalytic PyrB chains organized as two trimers (C3), and six regulatory PyrI chains organized as three dimers (R2).

The catalysed reaction is carbamoyl phosphate + L-aspartate = N-carbamoyl-L-aspartate + phosphate + H(+). Its pathway is pyrimidine metabolism; UMP biosynthesis via de novo pathway; (S)-dihydroorotate from bicarbonate: step 2/3. Its function is as follows. Catalyzes the condensation of carbamoyl phosphate and aspartate to form carbamoyl aspartate and inorganic phosphate, the committed step in the de novo pyrimidine nucleotide biosynthesis pathway. The polypeptide is Aspartate carbamoyltransferase catalytic subunit (Lactobacillus acidophilus (strain ATCC 700396 / NCK56 / N2 / NCFM)).